The following is a 201-amino-acid chain: Peptide deformylase (201 aa).

Residues Cys-114 and His-156 each coordinate Fe cation. Glu-157 is an active-site residue. Fe cation is bound at residue His-160.

It belongs to the polypeptide deformylase family. Fe(2+) is required as a cofactor.

It catalyses the reaction N-terminal N-formyl-L-methionyl-[peptide] + H2O = N-terminal L-methionyl-[peptide] + formate. In terms of biological role, removes the formyl group from the N-terminal Met of newly synthesized proteins. Requires at least a dipeptide for an efficient rate of reaction. N-terminal L-methionine is a prerequisite for activity but the enzyme has broad specificity at other positions. This is Peptide deformylase from Tropheryma whipplei (strain TW08/27) (Whipple's bacillus).